The chain runs to 260 residues: Pyridoxine 5'-phosphate synthase (260 aa).

N15 provides a ligand contact to 3-amino-2-oxopropyl phosphate. 17–18 is a 1-deoxy-D-xylulose 5-phosphate binding site; that stretch reads DH. 3-amino-2-oxopropyl phosphate is bound at residue R26. The active-site Proton acceptor is H51. 1-deoxy-D-xylulose 5-phosphate contacts are provided by R53 and H58. E78 (proton acceptor) is an active-site residue. T108 is a binding site for 1-deoxy-D-xylulose 5-phosphate. The active-site Proton donor is the H199. Residues G200 and 221–222 contribute to the 3-amino-2-oxopropyl phosphate site; that span reads GH.

Belongs to the PNP synthase family. As to quaternary structure, homooctamer; tetramer of dimers.

The protein localises to the cytoplasm. It catalyses the reaction 3-amino-2-oxopropyl phosphate + 1-deoxy-D-xylulose 5-phosphate = pyridoxine 5'-phosphate + phosphate + 2 H2O + H(+). Its pathway is cofactor biosynthesis; pyridoxine 5'-phosphate biosynthesis; pyridoxine 5'-phosphate from D-erythrose 4-phosphate: step 5/5. Its function is as follows. Catalyzes the complicated ring closure reaction between the two acyclic compounds 1-deoxy-D-xylulose-5-phosphate (DXP) and 3-amino-2-oxopropyl phosphate (1-amino-acetone-3-phosphate or AAP) to form pyridoxine 5'-phosphate (PNP) and inorganic phosphate. The protein is Pyridoxine 5'-phosphate synthase of Cupriavidus pinatubonensis (strain JMP 134 / LMG 1197) (Cupriavidus necator (strain JMP 134)).